Here is a 63-residue protein sequence, read N- to C-terminus: Large ribosomal subunit protein uL29 (63 aa).

The protein belongs to the universal ribosomal protein uL29 family.

The chain is Large ribosomal subunit protein uL29 from Bordetella petrii (strain ATCC BAA-461 / DSM 12804 / CCUG 43448).